The chain runs to 375 residues: Flagellar P-ring protein (375 aa).

Residues 1–23 (MFNQSFLKYMLFGFFLFSFHAHA) form the signal peptide.

This sequence belongs to the FlgI family. As to quaternary structure, the basal body constitutes a major portion of the flagellar organelle and consists of four rings (L,P,S, and M) mounted on a central rod.

The protein resides in the bacterial flagellum basal body. Its function is as follows. Assembles around the rod to form the L-ring and probably protects the motor/basal body from shearing forces during rotation. The sequence is that of Flagellar P-ring protein from Buchnera aphidicola subsp. Baizongia pistaciae (strain Bp).